Reading from the N-terminus, the 185-residue chain is Dihydrofolate reductase (185 aa).

The 180-residue stretch at 5-184 (KLNLIAAACD…ISYYFRVYKK (180 aa)) folds into the DHFR domain. NADP(+)-binding positions include Ala11 and 17–23 (GIGVNGA). Residue 31-36 (EMAYFT) participates in substrate binding. Residue 55–57 (RRT) participates in NADP(+) binding. Arg71 provides a ligand contact to substrate. NADP(+)-binding positions include 77–79 (THN) and 117–124 (GGSSIYRA).

This sequence belongs to the dihydrofolate reductase family.

The enzyme catalyses (6S)-5,6,7,8-tetrahydrofolate + NADP(+) = 7,8-dihydrofolate + NADPH + H(+). The protein operates within cofactor biosynthesis; tetrahydrofolate biosynthesis; 5,6,7,8-tetrahydrofolate from 7,8-dihydrofolate: step 1/1. Activated by dithiothreitol and p-chloromercuribenzoate. Inhibited by trimethoprim, methotrexate, sodium tetrathionate and hydroxymercuribenzoate. Functionally, key enzyme in folate metabolism. Catalyzes an essential reaction for de novo glycine and purine synthesis, and for DNA precursor synthesis. The chain is Dihydrofolate reductase (DHFR) from Heliothis virescens (Tobacco budworm moth).